The sequence spans 265 residues: Probable ribose-5-phosphate isomerase 2 (265 aa).

Alanine 2 carries the post-translational modification N-acetylalanine. A Phosphoserine modification is found at serine 96.

The protein belongs to the ribose 5-phosphate isomerase family.

The protein resides in the cytoplasm. It carries out the reaction aldehydo-D-ribose 5-phosphate = D-ribulose 5-phosphate. Its pathway is carbohydrate degradation; pentose phosphate pathway; D-ribose 5-phosphate from D-ribulose 5-phosphate (non-oxidative stage): step 1/1. Catalyzes the reversible conversion of ribose-5-phosphate to ribulose 5-phosphate. The protein is Probable ribose-5-phosphate isomerase 2 (RPI2) of Arabidopsis thaliana (Mouse-ear cress).